The sequence spans 181 residues: Probable calcium-binding protein CML43 (181 aa).

EF-hand domains follow at residues 24-59 (LNAL…LGLD), 107-142 (SPES…LGLP), and 145-180 (GEIE…VVVP). Residues Asp37, Asn39, Asp41, Glu48, Asp120, Asp122, Asp124, Glu131, Asp158, Asn160, Asp162, Arg164, and Glu169 each coordinate Ca(2+).

Expressed specifically in roots.

Functionally, calcium-binding protein that may mediate calcium-dependent signal during plant defense response. The sequence is that of Probable calcium-binding protein CML43 (CML43) from Arabidopsis thaliana (Mouse-ear cress).